The sequence spans 284 residues: Pantothenate synthetase (284 aa).

32 to 39 (MGALHEGH) provides a ligand contact to ATP. The active-site Proton donor is the His-39. Gln-63 serves as a coordination point for (R)-pantoate. A beta-alanine-binding site is contributed by Gln-63. 149-152 (GEKD) provides a ligand contact to ATP. Gln-155 serves as a coordination point for (R)-pantoate. Residues Val-178 and 186-189 (LSSR) contribute to the ATP site.

This sequence belongs to the pantothenate synthetase family. Homodimer.

The protein resides in the cytoplasm. It catalyses the reaction (R)-pantoate + beta-alanine + ATP = (R)-pantothenate + AMP + diphosphate + H(+). The protein operates within cofactor biosynthesis; (R)-pantothenate biosynthesis; (R)-pantothenate from (R)-pantoate and beta-alanine: step 1/1. Its function is as follows. Catalyzes the condensation of pantoate with beta-alanine in an ATP-dependent reaction via a pantoyl-adenylate intermediate. This chain is Pantothenate synthetase, found in Chelativorans sp. (strain BNC1).